The chain runs to 174 residues: Peptide deformylase (174 aa).

C96 and H138 together coordinate Fe cation. Residue E139 is part of the active site. Position 142 (H142) interacts with Fe cation.

The protein belongs to the polypeptide deformylase family. Fe(2+) serves as cofactor.

It carries out the reaction N-terminal N-formyl-L-methionyl-[peptide] + H2O = N-terminal L-methionyl-[peptide] + formate. Removes the formyl group from the N-terminal Met of newly synthesized proteins. Requires at least a dipeptide for an efficient rate of reaction. N-terminal L-methionine is a prerequisite for activity but the enzyme has broad specificity at other positions. The protein is Peptide deformylase of Helicobacter pylori (strain HPAG1).